A 532-amino-acid chain; its full sequence is Omega-hydroxyceramide transacylase (532 aa).

The 170-residue stretch at 16 to 185 (ISFSGSGFLS…TGMQPCAFWT (170 aa)) folds into the PNPLA domain. A GXSXG motif is present at residues 51–55 (GTSAG). The active-site Nucleophile is the serine 53. Aspartate 172 (proton acceptor) is an active-site residue. Positions 172–174 (DGG) match the DGA/G motif. Disordered regions lie at residues 290–457 (PERS…ELGQ) and 489–532 (VTES…SKVQ). The span at 310 to 322 (PHKEWVPKGDGRG) shows a compositional bias: basic and acidic residues. 2 stretches are compositionally biased toward low complexity: residues 380 to 389 (PPSSTPGSSL) and 397 to 411 (SPLS…SGSP). A compositionally biased stretch (basic residues) spans 517-532 (GFPRHSGSKKPSSKVQ).

In terms of tissue distribution, expressed in the digestive system. Expressed in the epidermis of skin keratinocytes. Strongly expressed in the granular layer. Expressed in the upper epidermis and eccrine sweat glands of the dermis and in the region of keratin filament bundles, which is more pronounced in upper epidermal layers and in the lower cornified layers.

Its subcellular location is the cytoplasm. The catalysed reaction is an N-(omega-hydroxy-ultra-long chain fatty acyl)-sphingoid base + a (9Z,12Z)-octadecadienoyl-containing triacyl-sn-glycerol = an N-[omega-(9Z,12Z-octadecadienoyloxy)-O-ultra-long chain fatty acyl]-sphingoid base + a diacylglycerol. The enzyme catalyses an N-(omega-hydroxy-ultra-long chain fatty acyl)-sphing-4-enine + a (9Z,12Z)-octadecadienoyl-containing triacyl-sn-glycerol = an N-(omega-(9Z,12Z-octadecadienoyloxy)-ultra-long chain fatty acyl)-sphing-4-enine + a diacylglycerol. It catalyses the reaction N-(30-hydroxytriacontanoyl)-sphing-4-enine + 1,2,3-tri-(9Z,12Z)-octadecadienoylglycerol = N-[30-(9Z,12Z-octadecadienoyloxy)-triacontanoyl]-sphing-4-enine + di-(9Z,12Z)-octadecadienoylglycerol. It carries out the reaction N-(28-hydroxyoctacosanoyl)-sphing-4-enine + a (9Z,12Z)-octadecadienoyl-containing triacyl-sn-glycerol = N-(28-(9Z,12Z-octadecadienoyloxy)-octacosanoyl)-sphing-4-enine + a diacylglycerol. The catalysed reaction is N-(32-hydroxydotriacontanoyl)-sphing-4-enine + a (9Z,12Z)-octadecadienoyl-containing triacyl-sn-glycerol = N-(32-(9Z,12Z-octadecadienoyloxy)-dotricontanoyl)-sphing-4-enine + a diacylglycerol. The enzyme catalyses N-(32-hydroxydotriacontenoyl)-sphing-4-enine + a (9Z,12Z)-octadecadienoyl-containing triacyl-sn-glycerol = an N-(32-(9Z,12Z-octadecadienoyloxy)-dotriacontenoyl)-sphing-4-enine + a diacylglycerol. It catalyses the reaction an N-(34-hydroxytetratriacontenoyl)-sphing-4-enine + a (9Z,12Z)-octadecadienoyl-containing triacyl-sn-glycerol = an N-(34-(9Z,12Z-octadecadienoyloxy)-tetratriacontenoyl)-sphing-4-enine + a diacylglycerol. It carries out the reaction an N-(34-hydroxytetratriacontadienoyl)-sphing-4-enine + a (9Z,12Z)-octadecadienoyl-containing triacyl-sn-glycerol = an N-(34-(9Z,12Z-octadecadienoyloxy)-tetratriacontadienoyl)-sphing-4-enine + a diacylglycerol. The catalysed reaction is an N-(36-hydroxyhexatriacontenoyl)-sphing-4-enine + a (9Z,12Z)-octadecadienoyl-containing triacyl-sn-glycerol = an N-(36-(9Z,12Z-octadecadienoyloxy)-hexatriacontenoyl)-sphing-4-enine + a diacylglycerol. The enzyme catalyses an N-(36-hydroxyhexatriacontadienoyl)-sphing-4-enine + a (9Z,12Z)-octadecadienoyl-containing triacyl-sn-glycerol = an N-(36-(9Z,12Z-octadecadienoyloxy)-hexatriacontadienoyl)-sphing-4-enine + a diacylglycerol. It catalyses the reaction an N-(38-hydroxyoctatriacontenoyl)-sphing-4-enine + a (9Z,12Z)-octadecadienoyl-containing triacyl-sn-glycerol = an N-(38-(9Z,12Z-octadecadienoyloxy)-octatriacontenoyl)-sphing-4-enine + a diacylglycerol. Its function is as follows. Omega-hydroxyceramide transacylase involved in the synthesis of omega-O-acylceramides (esterified omega-hydroxyacyl-sphingosine; EOS), which are extremely hydrophobic lipids involved in skin barrier formation. Catalyzes the last step of the synthesis of omega-O-acylceramides by transferring linoleic acid from triglycerides to an omega-hydroxyceramide. Omega-O-acylceramides, are required for the biogenesis of lipid lamellae in the stratum corneum and the formation of the cornified lipid envelope which are essential for the epidermis barrier function. These lipids also play a role in keratinocyte differentiation. May also act on omega-hydroxylated ultra-long chain fatty acids (omega-OH ULCFA) and acylglucosylceramides (GlcEOS). The chain is Omega-hydroxyceramide transacylase from Homo sapiens (Human).